A 440-amino-acid polypeptide reads, in one-letter code: 2-phosphinomethylmalate synthase (440 aa).

A Pyruvate carboxyltransferase domain is found at 39-313 (VWLSETTHRD…GARVNLPAVN (275 aa)).

Belongs to the alpha-IPM synthase/homocitrate synthase family. In terms of assembly, homodimer. Requires Mn(2+) as cofactor. Co(2+) serves as cofactor.

It carries out the reaction 3-(hydrohydroxyphosphoryl)pyruvate + acetyl-CoA + H2O = phosphinomethylmalate + CoA + H(+). The protein operates within secondary metabolite biosynthesis; bialaphos biosynthesis. With respect to regulation, strongly inhibited by p-chloromercuribenzoate (pCMB), iodoacetamide (IA) and EDTA. Involved in the biosynthesis of phosphinothricin tripeptide (PTT), also known as bialaphos (BA), a natural-product antibiotic and potent herbicide. Catalyzes the condensation berween phosphinopyruvic acid (PPA), an analog of oxalacetic acid, and acetyl-CoA to form R-2-phosphinomethylmalic acid (PMM). Can also act on oxaloacetate, but shows no activity when acetyl-CoA is substituted by propionyl-CoA or butyryl-CoA. The protein is 2-phosphinomethylmalate synthase of Streptomyces hygroscopicus.